Consider the following 352-residue polypeptide: DNA-directed RNA polymerase subunit alpha (352 aa).

Positions 1-236 are alpha N-terminal domain (alpha-NTD); sequence MTVNIRNWQE…DQLQVFVHFE (236 aa). The interval 257 to 352 is alpha C-terminal domain (alpha-CTD); that stretch reads SDVNQLNRFL…AKKLEQELLG (96 aa).

Belongs to the RNA polymerase alpha chain family. As to quaternary structure, homodimer. The RNAP catalytic core consists of 2 alpha, 1 beta, 1 beta' and 1 omega subunit. When a sigma factor is associated with the core the holoenzyme is formed, which can initiate transcription.

It carries out the reaction RNA(n) + a ribonucleoside 5'-triphosphate = RNA(n+1) + diphosphate. In terms of biological role, DNA-dependent RNA polymerase catalyzes the transcription of DNA into RNA using the four ribonucleoside triphosphates as substrates. The chain is DNA-directed RNA polymerase subunit alpha from Sphingopyxis alaskensis (strain DSM 13593 / LMG 18877 / RB2256) (Sphingomonas alaskensis).